The chain runs to 372 residues: Proline-rich P65 protein homolog (372 aa).

The span at 1–37 (MEKNRSAFQQNQQASNQPFNQDQNQYYQDPNQQQFNQ) shows a compositional bias: low complexity. A disordered region spans residues 1 to 100 (MEKNRSAFQQ…GFDPNQQYYQ (100 aa)). Repeat copies occupy residues 29-40 (DPNQQQFNQSGF), 41-52 (DPNQQQFNQPGF), 53-60 (DPNQQYYQ), 61-72 (DPNQQQFNQAGF), 73-80 (DQNQQYYQ), 81-92 (DPNQQQFNQPGF), 93-100 (DPNQQYYQ), 101-112 (DPNQQQFNQAGF), 113-119 (DQNQYYQ), 120-131 (DPNQQQFNQSGF), 132-138 (DQNQYYQ), 139-150 (DPNQQQFNQPSF), and 151-162 (DLNNQQFNQPGF). A compositionally biased stretch (polar residues) spans 38-49 (SGFDPNQQQFNQ). The segment covering 53-100 (DPNQQYYQDPNQQQFNQAGFDQNQQYYQDPNQQQFNQPGFDPNQQYYQ) has biased composition (low complexity). Residues 122–150 (NQQQFNQSGFDQNQYYQDPNQQQFNQPSF) are disordered.

The chain is Proline-rich P65 protein homolog from Mycoplasma genitalium (strain ATCC 33530 / DSM 19775 / NCTC 10195 / G37) (Mycoplasmoides genitalium).